The primary structure comprises 48 residues: Large ribosomal subunit protein bL33B (48 aa).

Belongs to the bacterial ribosomal protein bL33 family.

The chain is Large ribosomal subunit protein bL33B from Streptococcus thermophilus (strain CNRZ 1066).